The chain runs to 628 residues: Probable alpha-L-arabinofuranosidase A (628 aa).

A signal peptide spans 1 to 25 (MVAFSTISGLGALSLLFSIIESVDG). Asparagine 36, asparagine 51, asparagine 74, asparagine 152, asparagine 164, asparagine 260, asparagine 359, asparagine 404, and asparagine 493 each carry an N-linked (GlcNAc...) asparagine glycan.

This sequence belongs to the glycosyl hydrolase 51 family.

Its subcellular location is the secreted. It carries out the reaction Hydrolysis of terminal non-reducing alpha-L-arabinofuranoside residues in alpha-L-arabinosides.. It functions in the pathway glycan metabolism; L-arabinan degradation. Functionally, alpha-L-arabinofuranosidase involved in the degradation of arabinoxylan, a major component of plant hemicellulose. Acts only on small linear 1,5-alpha-linked L-arabinofuranosyl oligosaccharides. In Aspergillus terreus (strain NIH 2624 / FGSC A1156), this protein is Probable alpha-L-arabinofuranosidase A (abfA).